Reading from the N-terminus, the 174-residue chain is Ribosome maturation factor RimM (174 aa).

The PRC barrel domain maps to 98–171; sequence EDEFYFHEII…KIKIHVMEGL (74 aa).

Belongs to the RimM family. As to quaternary structure, binds ribosomal protein uS19.

It localises to the cytoplasm. An accessory protein needed during the final step in the assembly of 30S ribosomal subunit, possibly for assembly of the head region. Essential for efficient processing of 16S rRNA. May be needed both before and after RbfA during the maturation of 16S rRNA. It has affinity for free ribosomal 30S subunits but not for 70S ribosomes. This Bacillus velezensis (strain DSM 23117 / BGSC 10A6 / LMG 26770 / FZB42) (Bacillus amyloliquefaciens subsp. plantarum) protein is Ribosome maturation factor RimM.